A 683-amino-acid polypeptide reads, in one-letter code: Translation factor guf1, mitochondrial (683 aa).

Residues 1-43 (MRGCLQLARWLSAAPKGTAASLTRAPFVLANAPRYFTSSASRA) constitute a mitochondrion transit peptide. The tr-type G domain occupies 66–250 (ERYRNFCIVA…KIPAYGHFPV (185 aa)). Residues 75–82 (AHVDHGKS), 139–143 (DTPGH), and 193–196 (NKVD) each bind GTP.

Belongs to the TRAFAC class translation factor GTPase superfamily. Classic translation factor GTPase family. LepA subfamily.

It is found in the mitochondrion inner membrane. The enzyme catalyses GTP + H2O = GDP + phosphate + H(+). Functionally, promotes mitochondrial protein synthesis. May act as a fidelity factor of the translation reaction, by catalyzing a one-codon backward translocation of tRNAs on improperly translocated ribosomes. Binds to mitochondrial ribosomes in a GTP-dependent manner. The chain is Translation factor guf1, mitochondrial (guf1) from Aspergillus fumigatus (strain ATCC MYA-4609 / CBS 101355 / FGSC A1100 / Af293) (Neosartorya fumigata).